Reading from the N-terminus, the 602-residue chain is Elongation factor 4 (602 aa).

In terms of domain architecture, tr-type G spans 7-189 (KYIRNFCIIA…KIVDMIPCPE (183 aa)). GTP-binding positions include 19 to 24 (DHGKST) and 136 to 139 (NKID).

The protein belongs to the TRAFAC class translation factor GTPase superfamily. Classic translation factor GTPase family. LepA subfamily.

Its subcellular location is the cell membrane. The catalysed reaction is GTP + H2O = GDP + phosphate + H(+). Required for accurate and efficient protein synthesis under certain stress conditions. May act as a fidelity factor of the translation reaction, by catalyzing a one-codon backward translocation of tRNAs on improperly translocated ribosomes. Back-translocation proceeds from a post-translocation (POST) complex to a pre-translocation (PRE) complex, thus giving elongation factor G a second chance to translocate the tRNAs correctly. Binds to ribosomes in a GTP-dependent manner. In Ruminiclostridium cellulolyticum (strain ATCC 35319 / DSM 5812 / JCM 6584 / H10) (Clostridium cellulolyticum), this protein is Elongation factor 4.